Consider the following 372-residue polypeptide: Peptidyl-prolyl cis-trans isomerase D (372 aa).

The 167-residue stretch at 9–175 folds into the PPIase cyclophilin-type domain; sequence FFDISIGGKP…KEVKIEDCGV (167 aa). 3 TPR repeats span residues 220-253, 271-304, and 309-342; these read VEAV…LKQY, VSLF…DNTD, and AKAL…QPHD.

Belongs to the cyclophilin-type PPIase family. PPIase D subfamily.

The protein localises to the cytoplasm. The enzyme catalyses [protein]-peptidylproline (omega=180) = [protein]-peptidylproline (omega=0). Its function is as follows. PPIases accelerate the folding of proteins. It catalyzes the cis-trans isomerization of proline imidic peptide bonds in oligopeptides. The protein is Peptidyl-prolyl cis-trans isomerase D (CPR6) of Kluyveromyces lactis (strain ATCC 8585 / CBS 2359 / DSM 70799 / NBRC 1267 / NRRL Y-1140 / WM37) (Yeast).